The following is a 329-amino-acid chain: GTP 3',8-cyclase (329 aa).

Positions alanine 8 to alanine 234 constitute a Radical SAM core domain. Residue arginine 17 participates in GTP binding. [4Fe-4S] cluster-binding residues include cysteine 24 and cysteine 28. An S-adenosyl-L-methionine-binding site is contributed by tyrosine 30. Cysteine 31 is a binding site for [4Fe-4S] cluster. Arginine 68 serves as a coordination point for GTP. Glycine 72 contacts S-adenosyl-L-methionine. Threonine 99 lines the GTP pocket. Serine 123 serves as a coordination point for S-adenosyl-L-methionine. Lysine 160 is a binding site for GTP. Methionine 194 serves as a coordination point for S-adenosyl-L-methionine. [4Fe-4S] cluster is bound by residues cysteine 257 and cysteine 260. Arginine 262 to arginine 264 is a binding site for GTP. Residue cysteine 274 coordinates [4Fe-4S] cluster.

The protein belongs to the radical SAM superfamily. MoaA family. As to quaternary structure, monomer and homodimer. The cofactor is [4Fe-4S] cluster.

The catalysed reaction is GTP + AH2 + S-adenosyl-L-methionine = (8S)-3',8-cyclo-7,8-dihydroguanosine 5'-triphosphate + 5'-deoxyadenosine + L-methionine + A + H(+). The protein operates within cofactor biosynthesis; molybdopterin biosynthesis. In terms of biological role, catalyzes the cyclization of GTP to (8S)-3',8-cyclo-7,8-dihydroguanosine 5'-triphosphate. The polypeptide is GTP 3',8-cyclase (Pectobacterium atrosepticum (strain SCRI 1043 / ATCC BAA-672) (Erwinia carotovora subsp. atroseptica)).